The following is a 380-amino-acid chain: Fibromodulin (380 aa).

The N-terminal stretch at 1 to 18 (MRWANILLVAGLCRASLG) is a signal peptide. Positions 71–109 (EAQQASSWQCPQECDCPPNFSSAMYCDTRNLRYLPFVPT) constitute an LRRNT domain. A glycan (N-linked (GlcNAc...) asparagine) is linked at N89. 8 LRR repeats span residues 110 to 131 (RMKYVYFQNNQITAIQEGAFDN), 134 to 147 (ELEWLALHNNQISS), 160 to 180 (NLERLYMNNNNLTKMPSPLPR), 181 to 202 (SLRELHLSYNQISKVPSNALEG), 205 to 227 (NLTALYLSHNYIFEMGASLKGLK), 228 to 248 (SLILADLSYNHLRKVPDGLPM), 249 to 270 (ALEQLYLEYNYINAIPDDYFKV), and 273 to 293 (KLLYVRMSHNSLTNQGLSTNT). N131 carries N-linked (GlcNAc...) (keratan sulfate) asparagine glycosylation. N170 carries an N-linked (GlcNAc...) (keratan sulfate) asparagine glycan. N-linked (GlcNAc...) (keratan sulfate) asparagine glycosylation occurs at N205. N295 carries an N-linked (GlcNAc...) (keratan sulfate) asparagine glycan. LRR repeat units lie at residues 298–317 (SILELDLSYNRLQKIPRVST) and 318–339 (NLENLYLQGNQINEFSISSFCT). A disulfide bond links C338 and C371. An N-linked (GlcNAc...) asparagine glycan is attached at N345. One copy of the LRR 11 repeat lies at 348–371 (RLQVLRLDGNEIKRNAMPPDAPLC).

This sequence belongs to the small leucine-rich proteoglycan (SLRP) family. SLRP class II subfamily. Binds to type I and type II collagen. In terms of processing, binds keratan sulfate chains.

The protein resides in the secreted. It localises to the extracellular space. Its subcellular location is the extracellular matrix. In terms of biological role, affects the rate of fibrils formation. May have a primary role in collagen fibrillogenesis. This Gallus gallus (Chicken) protein is Fibromodulin (FMOD).